Reading from the N-terminus, the 688-residue chain is DNA ligase (688 aa).

NAD(+)-binding positions include 38–42 (DEEYD), 87–88 (SL), and Glu-118. The active-site N6-AMP-lysine intermediate is the Lys-120. Arg-141, Glu-175, Lys-291, and Lys-315 together coordinate NAD(+). 4 residues coordinate Zn(2+): Cys-409, Cys-412, Cys-428, and Cys-433. The BRCT domain maps to 590 to 679 (MKLDILKGLT…AELKGYNFDE (90 aa)).

It belongs to the NAD-dependent DNA ligase family. LigA subfamily. Mg(2+) serves as cofactor. Mn(2+) is required as a cofactor.

It catalyses the reaction NAD(+) + (deoxyribonucleotide)n-3'-hydroxyl + 5'-phospho-(deoxyribonucleotide)m = (deoxyribonucleotide)n+m + AMP + beta-nicotinamide D-nucleotide.. In terms of biological role, DNA ligase that catalyzes the formation of phosphodiester linkages between 5'-phosphoryl and 3'-hydroxyl groups in double-stranded DNA using NAD as a coenzyme and as the energy source for the reaction. It is essential for DNA replication and repair of damaged DNA. In Thermotoga petrophila (strain ATCC BAA-488 / DSM 13995 / JCM 10881 / RKU-1), this protein is DNA ligase.